The following is a 294-amino-acid chain: MFRGVGTAIVTPFKNGELDLESYERLVRYQLENGVNALIVLGTTGESPTVNEDEREKLVSRTLEIVDGKIPVIVGAGTNSTEKTLKLVKQAEKLGANGVLVVTPYYNKPTQEGLYQHYKYISERTDLGIVVYNVPGRTGVNVLPETAARIAADLKNVVGIKEANPDIDQIDRTVSLTKQARSDFMVWSGNDDRTFYLLCAGGDGVISVVSNVAPKQMVELCAEYFSGNLEKSREVHRKLRPLMKALFAETNPIPVKAALNLMGFIENELRLPLVPASEKTMELLRNVLKESGLL.

Pyruvate is bound at residue threonine 44. The active-site Proton donor/acceptor is tyrosine 132. The Schiff-base intermediate with substrate role is filled by lysine 161. Pyruvate is bound at residue isoleucine 206.

Belongs to the DapA family. As to quaternary structure, homotetramer; dimer of dimers.

The protein localises to the cytoplasm. The enzyme catalyses L-aspartate 4-semialdehyde + pyruvate = (2S,4S)-4-hydroxy-2,3,4,5-tetrahydrodipicolinate + H2O + H(+). The protein operates within amino-acid biosynthesis; L-lysine biosynthesis via DAP pathway; (S)-tetrahydrodipicolinate from L-aspartate: step 3/4. Catalyzes the condensation of (S)-aspartate-beta-semialdehyde [(S)-ASA] and pyruvate to 4-hydroxy-tetrahydrodipicolinate (HTPA). This is 4-hydroxy-tetrahydrodipicolinate synthase from Thermotoga petrophila (strain ATCC BAA-488 / DSM 13995 / JCM 10881 / RKU-1).